The primary structure comprises 217 residues: Imidazole glycerol phosphate synthase subunit HisH (217 aa).

The Glutamine amidotransferase type-1 domain occupies 3–217 (SVAVIDYGMG…FLRWEPWSSR (215 aa)). The Nucleophile role is filled by cysteine 82. Catalysis depends on residues histidine 193 and glutamate 195.

As to quaternary structure, heterodimer of HisH and HisF.

The protein localises to the cytoplasm. It catalyses the reaction 5-[(5-phospho-1-deoxy-D-ribulos-1-ylimino)methylamino]-1-(5-phospho-beta-D-ribosyl)imidazole-4-carboxamide + L-glutamine = D-erythro-1-(imidazol-4-yl)glycerol 3-phosphate + 5-amino-1-(5-phospho-beta-D-ribosyl)imidazole-4-carboxamide + L-glutamate + H(+). The enzyme catalyses L-glutamine + H2O = L-glutamate + NH4(+). Its pathway is amino-acid biosynthesis; L-histidine biosynthesis; L-histidine from 5-phospho-alpha-D-ribose 1-diphosphate: step 5/9. In terms of biological role, IGPS catalyzes the conversion of PRFAR and glutamine to IGP, AICAR and glutamate. The HisH subunit catalyzes the hydrolysis of glutamine to glutamate and ammonia as part of the synthesis of IGP and AICAR. The resulting ammonia molecule is channeled to the active site of HisF. The chain is Imidazole glycerol phosphate synthase subunit HisH from Methylococcus capsulatus (strain ATCC 33009 / NCIMB 11132 / Bath).